A 186-amino-acid chain; its full sequence is Prorelaxin 1 (186 aa).

A signal peptide spans 1 to 22 (MSSRLLLQLLGFWLFLSQPCRA). Intrachain disulfides connect Cys-36-Cys-173, Cys-48-Cys-186, and Cys-172-Cys-177. A propeptide spans 58–158 (SQEEPAPLAR…LKYLGSDAQS (101 aa)) (connecting peptide). A Pyrrolidone carboxylic acid modification is found at Gln-163.

Belongs to the insulin family. In terms of assembly, heterodimer of a B chain and an A chain linked by two disulfide bonds.

It localises to the secreted. In terms of biological role, relaxin is an ovarian hormone that acts with estrogen to produce dilatation of the birth canal in many mammals. The sequence is that of Prorelaxin 1 (Rln1) from Rattus norvegicus (Rat).